Here is a 37-residue protein sequence, read N- to C-terminus: Large ribosomal subunit protein bL36c (37 aa).

This sequence belongs to the bacterial ribosomal protein bL36 family.

Its subcellular location is the plastid. It localises to the chloroplast. This is Large ribosomal subunit protein bL36c from Phalaenopsis aphrodite subsp. formosana (Moth orchid).